Reading from the N-terminus, the 476-residue chain is Serine/threonine-protein kinase PBL36 (476 aa).

The Protein kinase domain occupies 126 to 412 (FRPESLLGEG…VEALKPLPNL (287 aa)). Residues 132-140 (LGEGGFGCV) and Lys-164 each bind ATP. A Phosphotyrosine modification is found at Tyr-209. The Proton acceptor role is filled by Asp-259. A phosphoserine mark is found at Ser-263 and Ser-293. Residues Thr-294 and Thr-299 each carry the phosphothreonine modification. At Tyr-307 the chain carries Phosphotyrosine. Positions 431 to 476 (NGVRTQGGGFVSRNGPPMRSLSSLNLPQASPYRYARQSPKPKGKEP) are disordered.

Belongs to the protein kinase superfamily. Ser/Thr protein kinase family. Interacts with SD129. Phosphorylated by SD129 in response to the pathogen-associated molecular pattern (PAMP) 3-OH-C10:0, a medium-chain 3-hydroxy fatty acid.

The protein resides in the cell membrane. The enzyme catalyses L-seryl-[protein] + ATP = O-phospho-L-seryl-[protein] + ADP + H(+). It catalyses the reaction L-threonyl-[protein] + ATP = O-phospho-L-threonyl-[protein] + ADP + H(+). Involved in chitin-triggered immune signaling and is required for reactive oxygen species (ROS) production. Acts downstream of SD129 in defense signaling triggered by the pathogen-associated molecular pattern (PAMP) 3-OH-C10:0, a medium-chain 3-hydroxy fatty acid. This chain is Serine/threonine-protein kinase PBL36, found in Arabidopsis thaliana (Mouse-ear cress).